The sequence spans 404 residues: S-adenosylmethionine synthase (404 aa).

139–144 (GKGSSD) contacts ATP.

Belongs to the AdoMet synthase 2 family. The cofactor is Mg(2+).

The catalysed reaction is L-methionine + ATP + H2O = S-adenosyl-L-methionine + phosphate + diphosphate. It functions in the pathway amino-acid biosynthesis; S-adenosyl-L-methionine biosynthesis; S-adenosyl-L-methionine from L-methionine: step 1/1. In terms of biological role, catalyzes the formation of S-adenosylmethionine from methionine and ATP. This Saccharolobus solfataricus (strain ATCC 35092 / DSM 1617 / JCM 11322 / P2) (Sulfolobus solfataricus) protein is S-adenosylmethionine synthase.